Consider the following 136-residue polypeptide: Ribosome-binding factor A (136 aa).

Belongs to the RbfA family. In terms of assembly, monomer. Binds 30S ribosomal subunits, but not 50S ribosomal subunits or 70S ribosomes.

Its subcellular location is the cytoplasm. Its function is as follows. One of several proteins that assist in the late maturation steps of the functional core of the 30S ribosomal subunit. Associates with free 30S ribosomal subunits (but not with 30S subunits that are part of 70S ribosomes or polysomes). Required for efficient processing of 16S rRNA. May interact with the 5'-terminal helix region of 16S rRNA. The sequence is that of Ribosome-binding factor A from Serratia proteamaculans (strain 568).